Consider the following 139-residue polypeptide: Small ribosomal subunit protein bS6 (139 aa).

The segment at 120–139 (KGASKVETPTGPESTDIQEK) is disordered. The span at 130–139 (GPESTDIQEK) shows a compositional bias: polar residues.

The protein belongs to the bacterial ribosomal protein bS6 family.

Binds together with bS18 to 16S ribosomal RNA. This is Small ribosomal subunit protein bS6 (rpsF) from Borreliella burgdorferi (strain ATCC 35210 / DSM 4680 / CIP 102532 / B31) (Borrelia burgdorferi).